A 377-amino-acid chain; its full sequence is F-box protein At4g00755 (377 aa).

The region spanning Leu-7 to Asn-47 is the F-box domain.

The sequence is that of F-box protein At4g00755 from Arabidopsis thaliana (Mouse-ear cress).